Consider the following 428-residue polypeptide: MGGLFSRWRTKPSTVEVLESIDKEIQALEEFREKNQRLQKLWVGRLILYSSVLYLFTCLIVYLWYLPDEFTARLAMTLPFFAFPLIIWSIRTVIIFFFSKRTERNNEALDDLKSQRKKILEEVMEKETYKTAKLILERFDPDSKKAKECEPPSAGAAVTARPGQEIRQRTAAQRNLSPTPASPNQGPPPQVPVSPGPPKDSSAPGGPPERTVTPALSSNVLPRHLGSPATSVPGMGLHPPGPPLARPILPRERGALDRIVEYLVGDGPQNRYALICQQCFSHNGMALKEEFEYIAFRCAYCFFLNPARKTRPQAPRLPEFSFEKRQVVEGSSSVGPLPSGSVLSSDNQFNEESLEHDVLDDNTEQTDDKIPATEQTNQVIEKASDSEEPEEKQETENEEASVIETNSTVPGADSIPDPELSGESLTAE.

G2 is lipidated: N-myristoyl glycine. Topologically, residues G2–R45 are cytoplasmic. The stretch at E16–L41 forms a coiled coil. A helical membrane pass occupies residues L46–L66. At P67 to T77 the chain is on the lumenal side. Residues L78 to F98 form a helical membrane-spanning segment. Residues S99–E428 are Cytoplasmic-facing. Positions T102–T128 form a coiled coil. 5 positions are modified to phosphoserine: S114, S153, S177, S182, and S194. Positions S143 to P247 are disordered. A compositionally biased stretch (pro residues) spans Q185–P198. Residues T211 and T213 each carry the phosphothreonine modification. Residues S217 and S227 each carry the phosphoserine modification. The C4-type; plays a role in ER morphology zinc finger occupies C276 to C301. Phosphoserine occurs at positions 321, 353, and 384. Residues H356–E428 are disordered. Residues S386–S401 are compositionally biased toward acidic residues. Position 414 is a phosphoserine (S414).

It belongs to the lunapark family. Homodimer; homodimerization requires the C4-type zinc finger motif and decreases during mitosis in a phosphorylation-dependent manner. Myristoylated; myristoylation is necessary for the endoplasmic reticulum (ER) three-way ER tubular junction formation, but is not required neither for membrane translocation, membrane topology formation, nor for the specific localization to ER membranes. Post-translationally, phosphorylated. Phosphorylation occurs at Ser-177, Ser-182, Ser-217, Ser-227, Ser-321 and Ser-384 during interphase. Phosphorylation occurs at Ser-114, Ser-153, Ser-194, Thr-211 and Ser-353 during mitosis; these phosphorylations reduce both its homodimerization and the ER three-way tubular junction formation. In terms of processing, subject to proteasomal degradation following phosphorylation during mitosis. In terms of tissue distribution, expressed in neural precursor cells, where it is detected at the growth-cone-like structure and branching sites of neurite-like processes.

The protein localises to the endoplasmic reticulum membrane. In terms of biological role, endoplasmic reticulum (ER)-shaping membrane protein that plays a role in determining ER morphology. Involved in the stabilization of nascent three-way ER tubular junctions within the ER network. May also play a role as a curvature-stabilizing protein within the three-way ER tubular junction network. May be involved in limb development. Is involved in central nervous system development. The polypeptide is Endoplasmic reticulum junction formation protein lunapark (Homo sapiens (Human)).